Here is a 250-residue protein sequence, read N- to C-terminus: MQREEKQMDMLLEAVLNRLNDLKHSIGAMIHRLETEYETINWPTFLDNFALISGHLTGLSKILSSEIGTPLRNLTVLPLLLTPERDEALLQLTEGRIPIFSHDLVPDYLRTKPDPGAESRMAAHEAKANNLQPDTAAKQVAQYNKVISHVWDIVSKAREEWDTEASSRPGIQQTSSLADTQALVAAVGVGNGLTMPVGPGGVPNAGIMIPPAIRQASPMSAVSPGAGPLGKMPSGIKTNIKSANQVHPYR.

Positions 217–250 (SPMSAVSPGAGPLGKMPSGIKTNIKSANQVHPYR) are disordered. A compositionally biased stretch (polar residues) spans 236–250 (IKTNIKSANQVHPYR).

This sequence belongs to the Mediator complex subunit 8 family. In terms of assembly, component of the Mediator complex.

It is found in the nucleus. Component of the Mediator complex, a coactivator involved in the regulated transcription of nearly all RNA polymerase II-dependent genes. Mediator functions as a bridge to convey information from gene-specific regulatory proteins to the basal RNA polymerase II transcription machinery. Mediator is recruited to promoters by direct interactions with regulatory proteins and serves as a scaffold for the assembly of a functional preinitiation complex with RNA polymerase II and the general transcription factors. This is Mediator of RNA polymerase II transcription subunit 8 (MED8) from Aedes aegypti (Yellowfever mosquito).